A 473-amino-acid polypeptide reads, in one-letter code: 3-isopropylmalate dehydratase large subunit (473 aa).

Residues cysteine 353, cysteine 414, and cysteine 417 each contribute to the [4Fe-4S] cluster site.

This sequence belongs to the aconitase/IPM isomerase family. LeuC type 1 subfamily. As to quaternary structure, heterodimer of LeuC and LeuD. [4Fe-4S] cluster serves as cofactor.

It catalyses the reaction (2R,3S)-3-isopropylmalate = (2S)-2-isopropylmalate. It functions in the pathway amino-acid biosynthesis; L-leucine biosynthesis; L-leucine from 3-methyl-2-oxobutanoate: step 2/4. Catalyzes the isomerization between 2-isopropylmalate and 3-isopropylmalate, via the formation of 2-isopropylmaleate. The sequence is that of 3-isopropylmalate dehydratase large subunit from Cellvibrio japonicus (strain Ueda107) (Pseudomonas fluorescens subsp. cellulosa).